The following is a 285-amino-acid chain: 4-hydroxybenzoate octaprenyltransferase (285 aa).

8 consecutive transmembrane segments (helical) span residues 28–48 (LWAL…CIFF), 86–106 (IAAW…FALI), 110–130 (NSLT…YPFF), 133–153 (FFAI…PMAF), 160–180 (VPLV…AYDT), 207–227 (VAAI…AGVM), 232–252 (WPYW…YTLI), and 262–284 (AAFR…AYAI).

Belongs to the UbiA prenyltransferase family. It depends on Mg(2+) as a cofactor.

The protein resides in the cell inner membrane. It carries out the reaction all-trans-octaprenyl diphosphate + 4-hydroxybenzoate = 4-hydroxy-3-(all-trans-octaprenyl)benzoate + diphosphate. Its pathway is cofactor biosynthesis; ubiquinone biosynthesis. Its function is as follows. Catalyzes the prenylation of para-hydroxybenzoate (PHB) with an all-trans polyprenyl group. Mediates the second step in the final reaction sequence of ubiquinone-8 (UQ-8) biosynthesis, which is the condensation of the polyisoprenoid side chain with PHB, generating the first membrane-bound Q intermediate 3-octaprenyl-4-hydroxybenzoate. This is 4-hydroxybenzoate octaprenyltransferase from Cupriavidus pinatubonensis (strain JMP 134 / LMG 1197) (Cupriavidus necator (strain JMP 134)).